We begin with the raw amino-acid sequence, 183 residues long: Adenine phosphoribosyltransferase (183 aa).

This sequence belongs to the purine/pyrimidine phosphoribosyltransferase family. In terms of assembly, homodimer.

The protein localises to the cytoplasm. The catalysed reaction is AMP + diphosphate = 5-phospho-alpha-D-ribose 1-diphosphate + adenine. Its pathway is purine metabolism; AMP biosynthesis via salvage pathway; AMP from adenine: step 1/1. Catalyzes a salvage reaction resulting in the formation of AMP, that is energically less costly than de novo synthesis. This is Adenine phosphoribosyltransferase from Cronobacter sakazakii (strain ATCC BAA-894) (Enterobacter sakazakii).